The chain runs to 237 residues: Ribosomal RNA small subunit methyltransferase G (237 aa).

Residues Gly78, Phe83, 129–130 (AE), and Arg148 each bind S-adenosyl-L-methionine.

Belongs to the methyltransferase superfamily. RNA methyltransferase RsmG family.

Its subcellular location is the cytoplasm. Specifically methylates the N7 position of a guanine in 16S rRNA. In Streptococcus equi subsp. zooepidemicus (strain H70), this protein is Ribosomal RNA small subunit methyltransferase G.